The chain runs to 114 residues: Large ribosomal subunit protein bL17 (114 aa).

The protein belongs to the bacterial ribosomal protein bL17 family. As to quaternary structure, part of the 50S ribosomal subunit. Contacts protein L32.

In Halothermothrix orenii (strain H 168 / OCM 544 / DSM 9562), this protein is Large ribosomal subunit protein bL17.